A 506-amino-acid chain; its full sequence is Xaa-Pro aminopeptidase 3 (506 aa).

The N-terminal 31 residues, 1 to 31 (MLSLLSTPRLVPVIARLRGLSGCMSCLQRRY), are a transit peptide targeting the mitochondrion. The segment at 54 to 79 (HPHLLRPGEVTPGLSQVEYALRRHKL) is interaction with TNFRSF1B. Residues Tyr-300, Asp-331, Asp-342, His-423, His-430, Glu-450, and Glu-474 each contribute to the substrate site. Positions 331, 342, and 423 each coordinate Mn(2+). 2 residues coordinate Mn(2+): Glu-450 and Glu-474.

Belongs to the peptidase M24B family. In terms of assembly, homodimer. Interacts with TNFRSF1B/TNFR2 (activated) and TRAF2. Requires Mn(2+) as cofactor. Expressed in the kidney, specifically in intercalated cells, but not in principal cells, of the distal convoluted tubule and cortical collecting duct (at protein level).

The protein localises to the mitochondrion. It is found in the cytoplasm. It carries out the reaction Release of any N-terminal amino acid, including proline, that is linked to proline, even from a dipeptide or tripeptide.. Its function is as follows. Catalyzes the removal of a penultimate prolyl residue from the N-termini of peptides, such as Leu-Pro-Ala. Also shows low activity towards peptides with Ala or Ser at the P1 position. Promotes TNFRSF1B-mediated phosphorylation of MAPK8/JNK1 and MAPK9/JNK2, suggesting a function as an adapter protein for TNFRSF1B; the effect is independent of XPNPEP3 peptidase activity. May inhibit apoptotic cell death induced via TNF-TNFRSF1B signaling. The polypeptide is Xaa-Pro aminopeptidase 3 (Xpnpep3) (Rattus norvegicus (Rat)).